The chain runs to 308 residues: Very-long-chain enoyl-CoA reductase (308 aa).

Residues 1-86 (MKHYEVEIRD…YFRDLGAQIS (86 aa)) are Cytoplasmic-facing. The residue at position 22 (Lys22) is an N6-acetyllysine. Ser58 is modified (phosphoserine). Position 60 is an N6-acetyllysine (Lys60). A helical transmembrane segment spans residues 87–106 (WVTVFLTEYAGPLFIYLLFY). Residues 107–124 (FRVPFIYGRKYDFTSSRH) lie on the Lumenal side of the membrane. A helical transmembrane segment spans residues 125 to 147 (TVVHLACMCHSFHYIKRLLETLF). At 148 to 158 (VHRFSHGTMPL) the chain is on the cytoplasmic side. A helical transmembrane segment spans residues 159-180 (RNIFKNCTYYWGFAAWMAYYIN). Topologically, residues 181–189 (HPLYTPPTY) are lumenal. A helical transmembrane segment spans residues 190-216 (GVQQVKLALAIFVICQLGNFSIHMALR). Residues 217 to 245 (DLRPAGSKTRKIPYPTKNPFTWLFLLVSC) lie on the Cytoplasmic side of the membrane. A helical membrane pass occupies residues 246–262 (PNYTYEVGSWIGFAIMT). Residues 263-264 (QC) lie on the Lumenal side of the membrane. The helical transmembrane segment at 265–292 (VPVALFSLVGFTQMTIWAKGKHRSYLKE) threads the bilayer. Residues 293 to 308 (FRDYPPLRMPIIPFLL) lie on the Cytoplasmic side of the membrane.

This sequence belongs to the steroid 5-alpha reductase family. In terms of assembly, interacts with ELOVL1 and LASS2. In terms of processing, glycosylated. Expressed at high levels in brain and is also found at lower levels in several other tissues.

Its subcellular location is the endoplasmic reticulum membrane. The enzyme catalyses a very-long-chain 2,3-saturated fatty acyl-CoA + NADP(+) = a very-long-chain (2E)-enoyl-CoA + NADPH + H(+). The catalysed reaction is octadecanoyl-CoA + NADP(+) = (2E)-octadecenoyl-CoA + NADPH + H(+). It catalyses the reaction (2E,7Z,10Z,13Z,16Z)-docosapentaenoyl-CoA + NADPH + H(+) = (7Z,10Z,13Z,16Z)-docosatetraenoyl-CoA + NADP(+). It carries out the reaction (2E,7Z,10Z,13Z,16Z,19Z)-docosahexaenoyl-CoA + NADPH + H(+) = (7Z,10Z,13Z,16Z,19Z)-docosapentaenoyl-CoA + NADP(+). The enzyme catalyses (2E,8Z,11Z,14Z)-eicosatetraenoyl-CoA + NADPH + H(+) = (8Z,11Z,14Z)-eicosatrienoyl-CoA + NADP(+). The catalysed reaction is (2E)-hexadecenoyl-CoA + NADPH + H(+) = hexadecanoyl-CoA + NADP(+). It participates in lipid metabolism; fatty acid biosynthesis. Its pathway is lipid metabolism; sphingolipid metabolism. Involved in both the production of very long-chain fatty acids for sphingolipid synthesis and the degradation of the sphingosine moiety in sphingolipids through the sphingosine 1-phosphate metabolic pathway. Catalyzes the last of the four reactions of the long-chain fatty acids elongation cycle. This endoplasmic reticulum-bound enzymatic process, allows the addition of 2 carbons to the chain of long- and very long-chain fatty acids/VLCFAs per cycle. This enzyme reduces the trans-2,3-enoyl-CoA fatty acid intermediate to an acyl-CoA that can be further elongated by entering a new cycle of elongation. Thereby, it participates in the production of VLCFAs of different chain lengths that are involved in multiple biological processes as precursors of membrane lipids and lipid mediators. Catalyzes the saturation step of the sphingosine 1-phosphate metabolic pathway, the conversion of trans-2-hexadecenoyl-CoA to palmitoyl-CoA. The protein is Very-long-chain enoyl-CoA reductase (Tecr) of Rattus norvegicus (Rat).